Here is a 154-residue protein sequence, read N- to C-terminus: UPF0178 protein GDI0551/Gdia_1457 (154 aa).

The protein belongs to the UPF0178 family.

This chain is UPF0178 protein GDI0551/Gdia_1457, found in Gluconacetobacter diazotrophicus (strain ATCC 49037 / DSM 5601 / CCUG 37298 / CIP 103539 / LMG 7603 / PAl5).